Here is a 481-residue protein sequence, read N- to C-terminus: ADAMTS-like protein 5 (481 aa).

The N-terminal stretch at 1-42 is a signal peptide; the sequence is MGKLRPGRVEWLASGHTERPHLFQNLLLFLWALLNCGLGVSA. Positions 45 to 97 constitute a TSP type-1 domain; that stretch reads PGEWTPWVSWTRCSSSCGRGVSVRSRRCLRLPGEEPCWGDSHEYRLCQLPDCP. Cystine bridges form between Cys57/Cys91, Cys61/Cys96, and Cys72/Cys81. The N-linked (GlcNAc...) asparagine glycan is linked to Asn218. Residues 331-361 form a disordered region; sequence QPQPRGVEPQPPAAPAVTPAQTPTLAPDPCP. The span at 345 to 355 shows a compositional bias: low complexity; sequence PAVTPAQTPTL. 3 cysteine pairs are disulfide-bonded: Cys360–Cys425, Cys363–Cys427, and Cys377–Cys479. The 120-residue stretch at 360 to 479 folds into the NTR domain; the sequence is CPPCPDTRGR…SRIRLTARRC (120 aa).

As to quaternary structure, interacts with heparin, FBN1 and FBN2. Proteolytically cleaved to release a C-terminal fragment containing the NTR domain. Post-translationally, contains at least one additional N-linked glycosylation site.

It is found in the secreted. Its subcellular location is the extracellular space. The protein resides in the extracellular matrix. Functionally, may play a role in modulation of fibrillin microfibrils in the extracellular matrix (ECM). In Homo sapiens (Human), this protein is ADAMTS-like protein 5 (ADAMTSL5).